A 139-amino-acid chain; its full sequence is Ribonuclease P protein component (139 aa).

The tract at residues phenylalanine 116–proline 139 is disordered.

It belongs to the RnpA family. In terms of assembly, consists of a catalytic RNA component (M1 or rnpB) and a protein subunit.

It carries out the reaction Endonucleolytic cleavage of RNA, removing 5'-extranucleotides from tRNA precursor.. Its function is as follows. RNaseP catalyzes the removal of the 5'-leader sequence from pre-tRNA to produce the mature 5'-terminus. It can also cleave other RNA substrates such as 4.5S RNA. The protein component plays an auxiliary but essential role in vivo by binding to the 5'-leader sequence and broadening the substrate specificity of the ribozyme. In Chlamydia abortus (strain DSM 27085 / S26/3) (Chlamydophila abortus), this protein is Ribonuclease P protein component.